Consider the following 194-residue polypeptide: Peptide deformylase (194 aa).

A disordered region spans residues 71–93 (DAEPEECGHDHGDGEGAHKHYPV). Basic and acidic residues predominate over residues 76-93 (ECGHDHGDGEGAHKHYPV). Cys119 and His161 together coordinate Fe cation. Glu162 is an active-site residue. His165 is a binding site for Fe cation.

Belongs to the polypeptide deformylase family. It depends on Fe(2+) as a cofactor.

The enzyme catalyses N-terminal N-formyl-L-methionyl-[peptide] + H2O = N-terminal L-methionyl-[peptide] + formate. Its function is as follows. Removes the formyl group from the N-terminal Met of newly synthesized proteins. Requires at least a dipeptide for an efficient rate of reaction. N-terminal L-methionine is a prerequisite for activity but the enzyme has broad specificity at other positions. The chain is Peptide deformylase from Erythrobacter litoralis (strain HTCC2594).